The chain runs to 437 residues: Carboxypeptidase A6 (437 aa).

An N-terminal signal peptide occupies residues 1-30; the sequence is MKCLGKRRGQAAAFLPLCWLFLKILQPGHS. A propeptide spans 31–129 (activation peptide); sequence HLYNNRYAGD…SSLHTQRNRR (99 aa). N-linked (GlcNAc...) asparagine glycosylation is found at asparagine 89 and asparagine 153. The Peptidase M14 domain maps to 138 to 432; the sequence is VYHSLEEIQN…LAVKNITMHL (295 aa). Positions 196 and 199 each coordinate Zn(2+). Residues 196 to 199, arginine 254, and 271 to 272 contribute to the substrate site; these read HARE and NR. Cysteine 265 and cysteine 288 form a disulfide bridge. Histidine 324 contacts Zn(2+). Substrate-binding positions include 325–326 and tyrosine 376; that span reads AY. The Proton donor/acceptor role is filled by glutamate 398. The N-linked (GlcNAc...) asparagine glycan is linked to asparagine 427.

It belongs to the peptidase M14 family. Zn(2+) is required as a cofactor. Expressed in the hippocampus, nucleus raphe, and cortex.

The protein localises to the secreted. It localises to the extracellular space. It is found in the extracellular matrix. May be involved in the proteolytic inactivation of enkephalins and neurotensin in some brain areas. May convert inactive angiotensin I into the biologically active angiotensin II. Releases a C-terminal amino acid, with preference for large hydrophobic C-terminal amino acids and shows only very weak activity toward small amino acids and histidine. The polypeptide is Carboxypeptidase A6 (CPA6) (Homo sapiens (Human)).